Reading from the N-terminus, the 111-residue chain is SPbeta prophage-derived uncharacterized protein YolC (111 aa).

Residues 1 to 25 form the signal peptide; it reads MKKRLIGFLVLVPALIMSGITLIEA.

This chain is SPbeta prophage-derived uncharacterized protein YolC (yolC), found in Bacillus subtilis (strain 168).